A 99-amino-acid polypeptide reads, in one-letter code: Aspartyl/glutamyl-tRNA(Asn/Gln) amidotransferase subunit C (99 aa).

It belongs to the GatC family. In terms of assembly, heterotrimer of A, B and C subunits.

It catalyses the reaction L-glutamyl-tRNA(Gln) + L-glutamine + ATP + H2O = L-glutaminyl-tRNA(Gln) + L-glutamate + ADP + phosphate + H(+). The enzyme catalyses L-aspartyl-tRNA(Asn) + L-glutamine + ATP + H2O = L-asparaginyl-tRNA(Asn) + L-glutamate + ADP + phosphate + 2 H(+). In terms of biological role, allows the formation of correctly charged Asn-tRNA(Asn) or Gln-tRNA(Gln) through the transamidation of misacylated Asp-tRNA(Asn) or Glu-tRNA(Gln) in organisms which lack either or both of asparaginyl-tRNA or glutaminyl-tRNA synthetases. The reaction takes place in the presence of glutamine and ATP through an activated phospho-Asp-tRNA(Asn) or phospho-Glu-tRNA(Gln). This Mycobacterium marinum (strain ATCC BAA-535 / M) protein is Aspartyl/glutamyl-tRNA(Asn/Gln) amidotransferase subunit C.